The following is a 216-amino-acid chain: Adenylate kinase (216 aa).

Position 10-15 (10-15 (GAGKGT)) interacts with ATP. Residues 30–59 (STGDIFRANIKEKTPLGIEAKRYIDNGQLV) form an NMP region. AMP contacts are provided by residues T31, R36, 57-59 (QLV), 85-88 (GFPR), and Q92. The LID stretch occupies residues 126–163 (GRRVCTSCGASYHIRFNPPKIEGKCDICDNELIQRKDD). R127 lines the ATP pocket. The Zn(2+) site is built by C130 and C133. ATP is bound at residue 136–137 (SY). Zn(2+) contacts are provided by C150 and C153. Positions 160 and 171 each coordinate AMP. ATP is bound at residue E199.

This sequence belongs to the adenylate kinase family. Monomer.

The protein resides in the cytoplasm. The enzyme catalyses AMP + ATP = 2 ADP. The protein operates within purine metabolism; AMP biosynthesis via salvage pathway; AMP from ADP: step 1/1. Its function is as follows. Catalyzes the reversible transfer of the terminal phosphate group between ATP and AMP. Plays an important role in cellular energy homeostasis and in adenine nucleotide metabolism. In Clostridium botulinum (strain 657 / Type Ba4), this protein is Adenylate kinase.